A 107-amino-acid chain; its full sequence is Insulin (107 aa).

The first 24 residues, 1–24, serve as a signal peptide directing secretion; sequence MALWIRSLPLLALLVFSGPGTSYA. 3 cysteine pairs are disulfide-bonded: cysteine 31–cysteine 93, cysteine 43–cysteine 106, and cysteine 92–cysteine 97. The propeptide at 57–84 is c peptide; the sequence is DVEQPLVSSPLRGEAGVLPFQQEEYEKV.

Belongs to the insulin family. In terms of assembly, heterodimer of a B chain and an A chain linked by two disulfide bonds.

Its subcellular location is the secreted. Functionally, insulin decreases blood glucose concentration. It increases cell permeability to monosaccharides, amino acids and fatty acids. It accelerates glycolysis, the pentose phosphate cycle, and glycogen synthesis in liver. The sequence is that of Insulin (INS) from Gallus gallus (Chicken).